A 571-amino-acid chain; its full sequence is Chitin-inducible gibberellin-responsive protein 1 (571 aa).

Positions 61–77 (TNTPDNQSSTETISAQP) are enriched in polar residues. Disordered regions lie at residues 61–80 (TNTP…PISP) and 151–180 (QRSR…YPTA). The GRAS domain maps to 192 to 571 (ELREDPQIIV…RKLISASAWH (380 aa)). The tract at residues 199–259 (IIVKQLLTRC…VARHGNSGTN (61 aa)) is leucine repeat I (LRI). Positions 278 to 343 (MRILYNICPY…GGPPRVRITG (66 aa)) are VHIID. The VHIID motif lies at 309-313 (IHIID). The segment at 359-391 (IVGKMLKSMSEEFKIPLEFTPLSVYATQVTKEM) is leucine repeat II (LRII). The segment at 400–494 (LSVNFTLQLH…QHCLAKDIVN (95 aa)) is PFYRE. An SAW region spans residues 497 to 571 (ACEGKDRVER…RKLISASAWH (75 aa)).

The protein belongs to the GRAS family.

Its subcellular location is the nucleus. Functionally, may play a regulatory role in the early step of oligosaccharide elicitor response, downstream of the membrane-associated high-affinity chitin-binding protein. The protein is Chitin-inducible gibberellin-responsive protein 1 (CIGR1) of Oryza sativa subsp. japonica (Rice).